A 233-amino-acid chain; its full sequence is Leucyl/phenylalanyl-tRNA--protein transferase (233 aa).

The protein belongs to the L/F-transferase family.

It is found in the cytoplasm. The catalysed reaction is N-terminal L-lysyl-[protein] + L-leucyl-tRNA(Leu) = N-terminal L-leucyl-L-lysyl-[protein] + tRNA(Leu) + H(+). It carries out the reaction N-terminal L-arginyl-[protein] + L-leucyl-tRNA(Leu) = N-terminal L-leucyl-L-arginyl-[protein] + tRNA(Leu) + H(+). It catalyses the reaction L-phenylalanyl-tRNA(Phe) + an N-terminal L-alpha-aminoacyl-[protein] = an N-terminal L-phenylalanyl-L-alpha-aminoacyl-[protein] + tRNA(Phe). Functions in the N-end rule pathway of protein degradation where it conjugates Leu, Phe and, less efficiently, Met from aminoacyl-tRNAs to the N-termini of proteins containing an N-terminal arginine or lysine. The protein is Leucyl/phenylalanyl-tRNA--protein transferase of Desulfatibacillum aliphaticivorans.